The sequence spans 157 residues: Transcription elongation factor GreA (157 aa).

The stretch at 10–76 forms a coiled coil; that stretch reads THEGKQKLEQ…TLENMIRNAK (67 aa).

It belongs to the GreA/GreB family.

Functionally, necessary for efficient RNA polymerase transcription elongation past template-encoded arresting sites. The arresting sites in DNA have the property of trapping a certain fraction of elongating RNA polymerases that pass through, resulting in locked ternary complexes. Cleavage of the nascent transcript by cleavage factors such as GreA or GreB allows the resumption of elongation from the new 3'terminus. GreA releases sequences of 2 to 3 nucleotides. The chain is Transcription elongation factor GreA from Bacillus velezensis (strain DSM 23117 / BGSC 10A6 / LMG 26770 / FZB42) (Bacillus amyloliquefaciens subsp. plantarum).